The primary structure comprises 303 residues: Coenzyme PQQ synthesis protein B (303 aa).

It belongs to the PqqB family.

It functions in the pathway cofactor biosynthesis; pyrroloquinoline quinone biosynthesis. May be involved in the transport of PQQ or its precursor to the periplasm. This Pseudomonas syringae pv. tomato (strain ATCC BAA-871 / DC3000) protein is Coenzyme PQQ synthesis protein B.